The chain runs to 123 residues: Secreted LysM effector Lys1 (123 aa).

An N-terminal signal peptide occupies residues 1–20 (MMGLAKTLLLASQLTAVVVA). The LysM domain occupies 72 to 118 (KFCWVQAGNKCYQVAMENHISLADFLKWNPGAGSDCRTLWANTYACV).

Belongs to the secreted LysM effector family.

In terms of biological role, might have a role in sequestration of chitin oligosaccharides (breakdown products of fungal cell walls that are released during invasion and act as triggers of host immunity) to dampen host defense. The protein is Secreted LysM effector Lys1 of Pochonia chlamydosporia (strain 123) (Metacordyceps chlamydosporia).